Here is a 146-residue protein sequence, read N- to C-terminus: MHIEYKFDTSTIQQKFKKLAQVMDGRDITRKVAGVLRQEAEKFFDLEQAPTGEKWEDLDEDYKKYRYAAGHTGKILQIRGGRGLAGSLSLDYGDNYALIGAAEEYGGFHQLGTTFMPARPFLGLGKDGVSEIKAILNRELSELTQE.

To phage Mu protein G.

In Haemophilus influenzae (strain ATCC 51907 / DSM 11121 / KW20 / Rd), this protein is Mu-like prophage FluMu G protein 1.